The following is a 301-amino-acid chain: uncharacterized protein (301 aa).

Disordered stretches follow at residues 56–126 and 149–173; these read ESPT…ESDL and LSTEDPKKVIVQSNTSSSSMSDASS. Residues 71–82 show a composition bias toward basic and acidic residues; that stretch reads VQKENQKPKDLN. Residues 93–102 are compositionally biased toward polar residues; that stretch reads KNSSGLVSQI. Positions 161-173 are enriched in low complexity; that stretch reads SNTSSSSMSDASS.

This is an uncharacterized protein from Caenorhabditis elegans.